Here is a 59-residue protein sequence, read N- to C-terminus: Large ribosomal subunit protein bL32 (59 aa).

It belongs to the bacterial ribosomal protein bL32 family.

In Malacoplasma penetrans (strain HF-2) (Mycoplasma penetrans), this protein is Large ribosomal subunit protein bL32.